A 572-amino-acid polypeptide reads, in one-letter code: AAA ATPase forming ring-shaped complexes (572 aa).

Positions 1–22 (MTEPRHESGSAAPQRPATDPVQ) are disordered. Residues 21–67 (VQRQVNLLRDQKRNLDKQAAALASQNEKLVRLLNASRQEIVGLKKTL) are a coiled coil. 270 to 275 (GNGKTL) is a binding site for ATP. Over residues 527 to 539 (HEQQDLPDTEDSE) the composition is skewed to acidic residues. The interval 527–572 (HEQQDLPDTEDSEDWARLTGRRGDTIDSVHMASHRPQGEPGPGATP) is disordered.

This sequence belongs to the AAA ATPase family. Homohexamer. Assembles into a hexameric ring structure.

The sequence is that of AAA ATPase forming ring-shaped complexes from Kocuria rhizophila (strain ATCC 9341 / DSM 348 / NBRC 103217 / DC2201).